The primary structure comprises 129 residues: UPF0102 protein Cpar_0015 (129 aa).

The protein belongs to the UPF0102 family.

In Chlorobaculum parvum (strain DSM 263 / NCIMB 8327) (Chlorobium vibrioforme subsp. thiosulfatophilum), this protein is UPF0102 protein Cpar_0015.